Here is a 229-residue protein sequence, read N- to C-terminus: PKHD-type hydroxylase RPD_3334 (229 aa).

The 103-residue stretch at 78–180 (QIFPPLFNRY…RVASFFWLQS (103 aa)) folds into the Fe2OG dioxygenase domain. Positions 98, 100, and 161 each coordinate Fe cation. Arginine 171 lines the 2-oxoglutarate pocket.

Fe(2+) is required as a cofactor. L-ascorbate serves as cofactor.

The sequence is that of PKHD-type hydroxylase RPD_3334 from Rhodopseudomonas palustris (strain BisB5).